We begin with the raw amino-acid sequence, 113 residues long: UPF0102 protein Shal_4069 (113 aa).

The protein belongs to the UPF0102 family.

The chain is UPF0102 protein Shal_4069 from Shewanella halifaxensis (strain HAW-EB4).